Consider the following 94-residue polypeptide: C-C motif chemokine 26 (94 aa).

Residues 1 to 23 form the signal peptide; the sequence is MKSFPVAFLVLLIFILSVHRGVT. 2 disulfides stabilise this stretch: cysteine 33–cysteine 57 and cysteine 34–cysteine 73.

The protein belongs to the intercrine beta (chemokine CC) family. In terms of assembly, monomer.

It localises to the secreted. In terms of biological role, chemoattractant for eosinophils and basophils. Acts as a ligand for C-C chemokine receptor CCR3 which triggers Ca(2+) mobilization in eosinophils. Also acts as a ligand for CX3C chemokine receptor CX3CR1, inducing cell chemotaxis. The chain is C-C motif chemokine 26 from Canis lupus familiaris (Dog).